The following is a 585-amino-acid chain: Lipoprotein LpqB (585 aa).

Residues 1–18 form the signal peptide; the sequence is MKRLLTVLVVGLVALVSG. Residue Cys19 is the site of N-palmitoyl cysteine attachment. Cys19 carries the S-diacylglycerol cysteine lipid modification. The disordered stretch occupies residues 24-46; it reads SSSSPQAIGTVERPAPPSLPKPT. The span at 37–46 shows a compositional bias: pro residues; the sequence is PAPPSLPKPT.

It belongs to the LpqB lipoprotein family. Interacts with MtrB, probably extracytoplasmically via its sensor domain.

It is found in the cell membrane. The protein resides in the secreted. It localises to the cell wall. May modulate activity of the MtrAB system in controlling homeostasis of the cell wall and cell division. The sequence is that of Lipoprotein LpqB from Mycolicibacterium smegmatis (strain ATCC 700084 / mc(2)155) (Mycobacterium smegmatis).